The sequence spans 306 residues: Arylesterase (306 aa).

The short motif at 82-84 (HGG) is the Involved in the stabilization of the negatively charged intermediate by the formation of the oxyanion hole element. Residues S156, D251, and H281 contribute to the active site.

In terms of assembly, monomer.

It carries out the reaction a phenyl acetate + H2O = a phenol + acetate + H(+). It catalyses the reaction An aryl dialkyl phosphate + H2O = dialkyl phosphate + an aryl alcohol.. Completely inhibited by chemical modifiers that are specific to Cys (HgCl(2) and p-chloromercuribenzoic acid), His (diethyl pyrocarbonate) and Ser (diisopropyl fluorophosphate and phenylmethanesulfonyl fluoride). No significant effect with chemical modifiers specific to Lys (pyridoxal 5'-phosphate) and Arg (phenylglyoxal). Not inhibited by inhibitors of A-esterases (paraoxon) or C-esterases (physostigmine/eserine). Activity is also not effected by incubation with 5 mM divalent cations for 30 minutes at 30 degrees Celsius or with 10 mM EDTA for 60 minutes at 75 degrees Celsius. Its function is as follows. Has a broad substrate specificity. Hydrolyzes various p-nitrophenyl phosphates, aromatic esters and p-nitrophenyl fatty acids in vitro. Most active against paraoxon, phenyl acetate and p-nitrophenyl caproate (C6), respectively. Also has tributyrinase activity, but shows no hydrolytic activity toward other triacylglycerols including tricaprylin, trimyristin, tripalmitin or triolein in vitro. The sequence is that of Arylesterase from Saccharolobus solfataricus (Sulfolobus solfataricus).